Here is an 89-residue protein sequence, read N- to C-terminus: Small ribosomal subunit protein uS15 (89 aa).

This sequence belongs to the universal ribosomal protein uS15 family. In terms of assembly, part of the 30S ribosomal subunit. Forms a bridge to the 50S subunit in the 70S ribosome, contacting the 23S rRNA.

One of the primary rRNA binding proteins, it binds directly to 16S rRNA where it helps nucleate assembly of the platform of the 30S subunit by binding and bridging several RNA helices of the 16S rRNA. Functionally, forms an intersubunit bridge (bridge B4) with the 23S rRNA of the 50S subunit in the ribosome. This Histophilus somni (strain 129Pt) (Haemophilus somnus) protein is Small ribosomal subunit protein uS15.